The sequence spans 386 residues: Alcohol dehydrogenase-like 2 (386 aa).

8 residues coordinate Zn(2+): C51, T53, H74, C104, C107, C110, C118, and C183. Residues T53 and H74 each contribute to the an alcohol site. T53 serves as a coordination point for NAD(+). Residues 208–213 (GLGAVG), D232, K237, 302–304 (LGM), F329, and R379 each bind NAD(+).

The protein belongs to the zinc-containing alcohol dehydrogenase family. Class-III subfamily. Homodimer. The cofactor is Zn(2+).

The protein localises to the cytoplasm. It carries out the reaction a primary alcohol + NAD(+) = an aldehyde + NADH + H(+). It catalyses the reaction a secondary alcohol + NAD(+) = a ketone + NADH + H(+). This chain is Alcohol dehydrogenase-like 2, found in Arabidopsis thaliana (Mouse-ear cress).